Consider the following 422-residue polypeptide: Dioxygenase str8 (422 aa).

Residues Cys-73, Cys-75, Cys-78, and His-119 each contribute to the Zn(2+) site. Fe cation is bound by residues His-243, Asp-245, and His-382.

It belongs to the gamma-BBH/TMLD family. Fe(2+) serves as cofactor.

Its pathway is mycotoxin biosynthesis. Its function is as follows. Dioxygenase; part of the gene cluster that mediates the biosynthesis of strobilurin A, an antifungal polyketide that contains a key beta-methoxyacrylate toxophore that targets the complex III of the mitochondrial electron transport chain. Strobilurin biosynthesis begins with construction of benzoyl CoA by step-wise elimination of ammonia from phenylalanine by the phenylalanine ammonia-lyase str11, oxygenation by str8 and retro-Claisen reaction to form benzoic acid, which is activated to its CoA thiolester benzoyl CoA by the dedicated CoA ligase str10. Benzoyl CoA forms the starter unit for the highly reducing polyketide synthase stpks1 that produces the polyketide prestrobilutin A. The FAD-dependent oxygenase str9 then catalyzes the key oxidative rearrangement responsible for the creation of the beta-methoxyacrylate toxophore. Str9 performs epoxidation of the 2,3 olefin of prestrobilutin A, followed by Meinwald rearrangement to furnish the aldehyde intermediate. Rapid enolization of the aldehyde intermediate would give the beta-methoxyacrylate skeleton and methylations catalyzed by str2 and str3 complete the synthesis and lead to the production of strobilurin A. The short-chain dehydrogenase stl2 and the dehydrogenase str4 play a role in the shunt pathway leading to the production of bolineol. The cluster encodes no obvious halogenase gene that could be involved in production of strobilurin B, nor any obvious dimethylallyl-transferase that could be involved in the production of strobilurin G. It is possible that unknown proteins encoded in, or near, the cluster (such as str1 or stl1) may form new classes of halogenases or dimethylally-transferases, or that the responsible genes are located elsewhere on the genome. Similarly, proteins encoded by str5/str6 hydrolases appear to have no chemical role in the biosynthesis of strobilurin A. Finally, no obvious self-resistance gene is found within the cluster. This chain is Dioxygenase str8, found in Strobilurus tenacellus.